We begin with the raw amino-acid sequence, 278 residues long: Ribosomal RNA small subunit methyltransferase A (278 aa).

Residues Asn27, Leu29, Gly54, Glu75, Asp101, and Asn120 each contribute to the S-adenosyl-L-methionine site.

It belongs to the class I-like SAM-binding methyltransferase superfamily. rRNA adenine N(6)-methyltransferase family. RsmA subfamily.

It is found in the cytoplasm. It carries out the reaction adenosine(1518)/adenosine(1519) in 16S rRNA + 4 S-adenosyl-L-methionine = N(6)-dimethyladenosine(1518)/N(6)-dimethyladenosine(1519) in 16S rRNA + 4 S-adenosyl-L-homocysteine + 4 H(+). Functionally, specifically dimethylates two adjacent adenosines (A1518 and A1519) in the loop of a conserved hairpin near the 3'-end of 16S rRNA in the 30S particle. May play a critical role in biogenesis of 30S subunits. The chain is Ribosomal RNA small subunit methyltransferase A from Zymomonas mobilis subsp. mobilis (strain ATCC 31821 / ZM4 / CP4).